Here is a 127-residue protein sequence, read N- to C-terminus: Large ribosomal subunit protein bL17 (127 aa).

The protein belongs to the bacterial ribosomal protein bL17 family. Part of the 50S ribosomal subunit. Contacts protein L32.

The sequence is that of Large ribosomal subunit protein bL17 from Limosilactobacillus reuteri (strain DSM 20016) (Lactobacillus reuteri).